We begin with the raw amino-acid sequence, 184 residues long: Large ribosomal subunit protein uL6 (184 aa).

Belongs to the universal ribosomal protein uL6 family. As to quaternary structure, part of the 50S ribosomal subunit.

Its function is as follows. This protein binds to the 23S rRNA, and is important in its secondary structure. It is located near the subunit interface in the base of the L7/L12 stalk, and near the tRNA binding site of the peptidyltransferase center. This Pseudothermotoga lettingae (strain ATCC BAA-301 / DSM 14385 / NBRC 107922 / TMO) (Thermotoga lettingae) protein is Large ribosomal subunit protein uL6.